Consider the following 1881-residue polypeptide: Nuclear pore membrane glycoprotein 210-like (1881 aa).

An N-terminal signal peptide occupies residues 1 to 32; it reads MIAFGAPRRRSFGLLFSLAPHLFFLFLIGTLA. 3 N-linked (GlcNAc...) asparagine glycosylation sites follow: Asn-80, Asn-344, and Asn-808. Residues 1078-1150 form the BIG2 domain; sequence FPPFRLIPEK…TIQTVNEDTG (73 aa). Residue Asn-1441 is glycosylated (N-linked (GlcNAc...) asparagine). The chain crosses the membrane as a helical span at residues 1804 to 1824; it reads YQILLFTLFAVLASTSFIFLA.

Belongs to the NUP210 family. As to expression, expressed in testis.

The protein localises to the nucleus membrane. It is found in the nucleus. It localises to the nucleoplasm. The protein is Nuclear pore membrane glycoprotein 210-like (Nup210l) of Mus musculus (Mouse).